A 275-amino-acid polypeptide reads, in one-letter code: Transmembrane protein 202 (275 aa).

4 helical membrane-spanning segments follow: residues 60–80, 116–136, 151–171, and 193–213; these read SGFS…QFLV, ALFL…LSSC, VSML…LFLA, and WCSE…FITF.

The protein localises to the membrane. The sequence is that of Transmembrane protein 202 (Tmem202) from Mus musculus (Mouse).